Consider the following 448-residue polypeptide: Ribosomal protein uS12 methylthiotransferase RimO (448 aa).

Residues 16–126 (PKISFVSLGC…VVAAVHEAVP (111 aa)) enclose the MTTase N-terminal domain. [4Fe-4S] cluster is bound by residues C25, C61, C90, C157, C161, and C164. Residues 143-380 (LTPRHYAYLK…METQNGIALR (238 aa)) enclose the Radical SAM core domain. The 66-residue stretch at 383 to 448 (RAKVGKRLPV…EAYDLYGSVA (66 aa)) folds into the TRAM domain.

The protein belongs to the methylthiotransferase family. RimO subfamily. [4Fe-4S] cluster serves as cofactor.

The protein resides in the cytoplasm. It carries out the reaction L-aspartate(89)-[ribosomal protein uS12]-hydrogen + (sulfur carrier)-SH + AH2 + 2 S-adenosyl-L-methionine = 3-methylsulfanyl-L-aspartate(89)-[ribosomal protein uS12]-hydrogen + (sulfur carrier)-H + 5'-deoxyadenosine + L-methionine + A + S-adenosyl-L-homocysteine + 2 H(+). Functionally, catalyzes the methylthiolation of an aspartic acid residue of ribosomal protein uS12. This is Ribosomal protein uS12 methylthiotransferase RimO from Methylobacterium radiotolerans (strain ATCC 27329 / DSM 1819 / JCM 2831 / NBRC 15690 / NCIMB 10815 / 0-1).